Consider the following 340-residue polypeptide: Delta(1)-pyrroline-2-carboxylate reductase 1 (340 aa).

The Charge relay system role is filled by Ser50. The active-site Proton donor is His51. Substrate is bound at residue Arg55. An NADP(+)-binding site is contributed by 123 to 127 (HFSAL). Residue Thr163 participates in substrate binding. Residue 181-183 (DFA) participates in NADP(+) binding. 189-190 (RG) provides a ligand contact to substrate. Residue Asp191 is the Charge relay system of the active site. Residues 232-233 (HK) and 307-313 (RLPSQRR) contribute to the NADP(+) site.

It belongs to the LDH2/MDH2 oxidoreductase family. Homodimer.

It carries out the reaction L-proline + NAD(+) = 1-pyrroline-2-carboxylate + NADH + H(+). The enzyme catalyses L-proline + NADP(+) = 1-pyrroline-2-carboxylate + NADPH + H(+). Functionally, catalyzes the reduction of Delta(1)-pyrroline-2-carboxylate (Pyr2C) to L-proline, using NADPH as the electron donor. May be involved in a degradation pathway that converts trans-3-hydroxy-L-proline (t3LHyp) to L-proline. This Burkholderia ambifaria (strain ATCC BAA-244 / DSM 16087 / CCUG 44356 / LMG 19182 / AMMD) (Burkholderia cepacia (strain AMMD)) protein is Delta(1)-pyrroline-2-carboxylate reductase 1.